Consider the following 2063-residue polypeptide: Nuclear receptor coactivator 6 (2063 aa).

The tract at residues 1–928 (MVLDDLPNLE…PPRKKKNSQQ (928 aa)) is TBP/GTF2A-binding region. The tract at residues 1–1057 (MVLDDLPNLE…LPVSQNVHPP (1057 aa)) is CREBBP-binding region. Residues 1–1310 (MVLDDLPNLE…QTHKLDSVVV (1310 aa)) form an NCOA1-binding region region. Arg95 carries the post-translational modification Asymmetric dimethylarginine. Disordered stretches follow at residues 184–251 (IPPG…VNRQ), 281–549 (QQQQ…APQL), and 789–811 (RPPGPSPHMAQQHGDPATTANND). The span at 281 to 300 (QQQQQLQARPPQQHQQQQPQ) shows a compositional bias: low complexity. Polar residues-rich tracts occupy residues 353–368 (MQQQLQARPSLATVQT), 379–406 (GSQQASQAHTNFPQMSNPGQFTAPQMKS), 417–453 (PLQQPHLTNKSPASSPSSFQQGSPASSPTVNQTQQQM), 462–502 (PLPQ…QGPQ), and 522–549 (GQANPNFMQGQVPSTTATTPGNSGAPQL). The segment at 773 to 927 (VNNSPSQVMG…KPPRKKKNSQ (155 aa)) is NCOA6IP-binding region. Ser884 is modified (phosphoserine; by MAPK; in vitro). An LXXLL motif 1 motif is present at residues 887 to 891 (LVNLL). 3 disordered regions span residues 899-1278 (HFGV…LNPT), 1310-1353 (VNSG…KAPK), and 1448-1474 (EVKMVVPEDQSKKDGQPSDPNKLPSVE). Over residues 903–912 (NNKQNNTNAN) the composition is skewed to low complexity. A compositionally biased stretch (basic residues) spans 913–925 (KPKKKKPPRKKKN). Low complexity predominate over residues 982-992 (PLQQMPPQLMQ). Over residues 995–1020 (APPPQPPQQQPQPQLPQQQQPPPPSQ) the composition is skewed to pro residues. A compositionally biased stretch (low complexity) spans 1021-1041 (PQSQQQQQQQQQMMMMLMMQQ). Residues Arg1047 and Arg1058 each carry the asymmetric dimethylarginine modification. Residues 1063–1075 (PDSQRMPMQQSGS) show a composition bias toward polar residues. At Arg1096 the chain carries Asymmetric dimethylarginine. 3 stretches are compositionally biased toward polar residues: residues 1104 to 1125 (PLGSNSRKMVYQESPQNPSSSP), 1173 to 1191 (LSATQGATPQQPPVNSLPS), and 1202 to 1214 (APTQTSRPKTPNR). Over residues 1219-1232 (PYYPQTPNNRPPST) the composition is skewed to pro residues. A compositionally biased stretch (polar residues) spans 1310–1320 (VNSGKQSNSGA). Low complexity predominate over residues 1322–1345 (KRASPSNSRRSSPGSSRKTTPSPG). The LXXLL motif 2 motif lies at 1491–1495 (LSQLL). An EP300/CRSP3-binding region region spans residues 1641–2063 (SEGQSAAQSN…AVQSKRRKSK (423 aa)). The tract at residues 1738-1820 (ATPVQLPSPP…VSSSKGKGKV (83 aa)) is disordered. Residues 1750–1763 (SSPVVPSHPPVQQV) show a composition bias toward low complexity. A compositionally biased stretch (polar residues) spans 1773–1798 (PQVNTSADQNTLPSSQSTTMVSPLLT). Positions 1799–1815 (NSPGSSGNRRSPVSSSK) are enriched in low complexity. 2 positions are modified to N6-acetyllysine: Lys1819 and Lys1822. Disordered regions lie at residues 1837 to 1908 (GSLE…LPGG) and 1995 to 2063 (IVSG…RKSK). Residues 2002–2011 (EPKEIVEKSK) show a composition bias toward basic and acidic residues. Phosphoserine is present on Ser2018.

Monomer and homodimer. Interacts with RBM39. Interacts in vitro with the basal transcription factors GTF2A and TBP, suggesting an autonomous transactivation function. Interacts with NCOA1, CRSP3, RBM14, the histone acetyltransferases EP300 and CREBBP, and with the methyltransferases NCOA6IP and PRMT2/HRMT1L1. Component of the MLL2/3 complex (also named ASCOM complex), at least composed of KMT2D/MLL2 or KMT2C/MLL3, ASH2L, RBBP5, WDR5, NCOA6, DPY30, KDM6A, PAXIP1/PTIP, PAGR1 and alpha- and beta-tubulin. Interacts with ZNF335; may enhance ligand-dependent transcriptional activation by nuclear hormone receptors. In terms of processing, phosphorylated by PRKDC. Phosphorylation on Ser-884 leads to a strong decrease in binding to ESR1 and ESR2. Ubiquitous. Highly expressed in brain, prostate, testis and ovary; weakly expressed in lung, thymus and small intestine.

The protein localises to the nucleus. Nuclear receptor coactivator that directly binds nuclear receptors and stimulates the transcriptional activities in a hormone-dependent fashion. Coactivates expression in an agonist- and AF2-dependent manner. Involved in the coactivation of different nuclear receptors, such as for steroids (GR and ERs), retinoids (RARs and RXRs), thyroid hormone (TRs), vitamin D3 (VDR) and prostanoids (PPARs). Probably functions as a general coactivator, rather than just a nuclear receptor coactivator. May also be involved in the coactivation of the NF-kappa-B pathway. May coactivate expression via a remodeling of chromatin and its interaction with histone acetyltransferase proteins. The protein is Nuclear receptor coactivator 6 (NCOA6) of Homo sapiens (Human).